Reading from the N-terminus, the 417-residue chain is D-amino acid dehydrogenase (417 aa).

Residue 3–17 coordinates FAD; it reads IVVLGGGVVGVTSAW.

The protein belongs to the DadA oxidoreductase family. It depends on FAD as a cofactor.

The enzyme catalyses a D-alpha-amino acid + A + H2O = a 2-oxocarboxylate + AH2 + NH4(+). The protein operates within amino-acid degradation; D-alanine degradation; NH(3) and pyruvate from D-alanine: step 1/1. Its function is as follows. Oxidative deamination of D-amino acids. In Aeromonas salmonicida (strain A449), this protein is D-amino acid dehydrogenase.